A 609-amino-acid chain; its full sequence is Phosphoenolpyruvate carboxykinase [GTP] (609 aa).

Substrate is bound by residues R81 and 220–222; that span reads YGG. Mn(2+)-binding residues include K229 and H249. A substrate-binding site is contributed by S271. 272-277 provides a ligand contact to GTP; that stretch reads ACGKTN. Residue C273 is part of the active site. Position 296 (D296) interacts with Mn(2+). Residue 387 to 389 participates in substrate binding; sequence NSR. Residues R389, R420, and 515 to 518 contribute to the GTP site; that span reads FGEN.

Belongs to the phosphoenolpyruvate carboxykinase [GTP] family. Monomer. Mn(2+) is required as a cofactor.

It localises to the cytoplasm. It catalyses the reaction oxaloacetate + GTP = phosphoenolpyruvate + GDP + CO2. It functions in the pathway carbohydrate biosynthesis; gluconeogenesis. Catalyzes the conversion of oxaloacetate (OAA) to phosphoenolpyruvate (PEP), the rate-limiting step in the metabolic pathway that produces glucose from lactate and other precursors derived from the citric acid cycle. The polypeptide is Phosphoenolpyruvate carboxykinase [GTP] (Mycobacterium marinum (strain ATCC BAA-535 / M)).